The chain runs to 642 residues: Arginine--tRNA ligase, chloroplastic/mitochondrial (642 aa).

Residues 1 to 53 constitute a chloroplast and mitochondrion transit peptide; sequence MFIFPKDENRRETLTTKLRFSADHLTFTTVTEKLRATAWRFAFSSRAKSVVAM. The residue at position 54 (Ala-54) is an N-acetylalanine. Residues 190-201 carry the 'HIGH' region motif; it reads PNIAKEMHVGHL.

Belongs to the class-I aminoacyl-tRNA synthetase family.

The protein localises to the plastid. The protein resides in the chloroplast. Its subcellular location is the mitochondrion. It catalyses the reaction tRNA(Arg) + L-arginine + ATP = L-arginyl-tRNA(Arg) + AMP + diphosphate. Its function is as follows. Forms part of a macromolecular complex that catalyzes the attachment of specific amino acids to cognate tRNAs during protein synthesis. In Arabidopsis thaliana (Mouse-ear cress), this protein is Arginine--tRNA ligase, chloroplastic/mitochondrial.